The sequence spans 251 residues: Transmembrane ascorbate-dependent reductase CYB561 (251 aa).

Methionine 1 carries the N-acetylmethionine modification. The Cytoplasmic portion of the chain corresponds to 1-16; sequence MEGGAAASTPAALPYY. The chain crosses the membrane as a helical span at residues 17 to 37; the sequence is VAFSQLLGLTLVAMTGAWLGL. In terms of domain architecture, Cytochrome b561 spans 19-220; that stretch reads FSQLLGLTLV…FGGAVLYILT (202 aa). The Vesicular segment spans residues 38–51; sequence YRGGIAWESDLQFN. The helical transmembrane segment at 52–72 threads the bilayer; it reads AHPLCMVIGLIFLQGDALLVY. Positions 53, 73, and 80 each coordinate heme b. At 73–85 the chain is on the cytoplasmic side; sequence RVFRNEAKRTTKV. L-ascorbate-binding residues include lysine 80 and lysine 84. Residues 86-106 traverse the membrane as a helical segment; sequence LHGLLHIFALVIALVGLVAVF. Residues histidine 87, 116 to 119, and histidine 121 contribute to the heme b site; that span reads DLYS. At 107-124 the chain is on the vesicular side; the sequence is DYHRKEGYADLYSLHSWC. A helical membrane pass occupies residues 125–145; that stretch reads GILVFVLYFVQWLVGFSFFLF. The Cytoplasmic portion of the chain corresponds to 146–158; the sequence is PGASFSLRSRYRP. Arginine 153 lines the L-ascorbate pocket. Residues 159-179 form a helical membrane-spanning segment; the sequence is QHIFFGATIFLLSVGTALLGL. Residues histidine 160 and glutamate 181 each coordinate heme b. Residues 180–198 lie on the Vesicular side of the membrane; sequence KEALLFKLRDKYSAFEPEG. Residues 199-219 form a helical membrane-spanning segment; that stretch reads VLANVLGLLLACFGGAVLYIL. The Cytoplasmic segment spans residues 220–251; it reads TRADWKRPSQAEEQALSMDFKTLTEGDSPGSQ. Lysine 225 is a heme b binding site. A Phosphoserine modification is found at serine 247.

It depends on heme b as a cofactor.

The protein localises to the cytoplasmic vesicle. The protein resides in the secretory vesicle. It localises to the chromaffin granule membrane. It catalyses the reaction monodehydro-L-ascorbate radical(out) + L-ascorbate(in) = monodehydro-L-ascorbate radical(in) + L-ascorbate(out). Transmembrane reductase that uses ascorbate as an electron donor in the cytoplasm and transfers electrons across membranes to reduce monodehydro-L-ascorbate radical in the lumen of secretory vesicles. It is therefore involved the regeneration and homeostasis within secretory vesicles of ascorbate which in turn provides reducing equivalents needed to support the activity of intravesicular enzymes. The chain is Transmembrane ascorbate-dependent reductase CYB561 (CYB561) from Pongo abelii (Sumatran orangutan).